A 369-amino-acid chain; its full sequence is MDLSIPNPVADATRQVEGGSPAGGQPLEIDALIVGAGPVGLFQVFELGLLEIKAHVIDSLKVVGGQCVELYPDKPIYDIPAVPSCTGQELTDNLLKQIEPFEPTFHLGQEVSVVERRDDGRFFVETSLGTRFITKTIFIAAGVGSFQPRTLKVDGIDKFDGKQLFYRVKDPSRFHGRNLVIVGGGDSALDWTLDLVGKAESVVMIHRRDGFRAAPASVAKMKELCEQMEMQFLVGQISGYEEKDGVLTEIKVSGADGVTRRLPLDDLLVFFGLSPKLGPIAEWGLDLERKQIKVDTEKFQTNIPGIFAVGDINTYPGKKKLILSGFHEAALAAFGAAPYIFPEKKIHMQYTTTSPKLHKVLGVESPVFD.

A disordered region spans residues 1 to 21 (MDLSIPNPVADATRQVEGGSP). Residues D58, Q66, Y71, V111, F146, D311, and T352 each coordinate FAD.

This sequence belongs to the ferredoxin--NADP reductase type 2 family. As to quaternary structure, homodimer. FAD is required as a cofactor.

It catalyses the reaction 2 reduced [2Fe-2S]-[ferredoxin] + NADP(+) + H(+) = 2 oxidized [2Fe-2S]-[ferredoxin] + NADPH. The sequence is that of Ferredoxin--NADP reductase 2 from Cupriavidus taiwanensis (strain DSM 17343 / BCRC 17206 / CCUG 44338 / CIP 107171 / LMG 19424 / R1) (Ralstonia taiwanensis (strain LMG 19424)).